The chain runs to 219 residues: Probable nicotinate-nucleotide adenylyltransferase (219 aa).

Belongs to the NadD family.

The enzyme catalyses nicotinate beta-D-ribonucleotide + ATP + H(+) = deamido-NAD(+) + diphosphate. Its pathway is cofactor biosynthesis; NAD(+) biosynthesis; deamido-NAD(+) from nicotinate D-ribonucleotide: step 1/1. In terms of biological role, catalyzes the reversible adenylation of nicotinate mononucleotide (NaMN) to nicotinic acid adenine dinucleotide (NaAD). The protein is Probable nicotinate-nucleotide adenylyltransferase of Hahella chejuensis (strain KCTC 2396).